The primary structure comprises 455 residues: Phosphoglucosamine mutase (455 aa).

Serine 102 acts as the Phosphoserine intermediate in catalysis. Residues serine 102, aspartate 241, aspartate 243, and aspartate 245 each coordinate Mg(2+). Phosphoserine is present on serine 102.

This sequence belongs to the phosphohexose mutase family. Mg(2+) is required as a cofactor. Activated by phosphorylation.

The enzyme catalyses alpha-D-glucosamine 1-phosphate = D-glucosamine 6-phosphate. Functionally, catalyzes the conversion of glucosamine-6-phosphate to glucosamine-1-phosphate. The chain is Phosphoglucosamine mutase from Legionella pneumophila (strain Corby).